The following is a 300-amino-acid chain: Cathepsin B-like CP2 (300 aa).

A signal peptide spans 1-19 (MKLFLLAAAAFSAPALTVS). Intrachain disulfides connect Cys-88–Cys-115, Cys-98–Cys-141, and Cys-134–Cys-177. Cys-101 is an active-site residue. Residues His-245 and Asn-266 contribute to the active site.

Belongs to the peptidase C1 family.

The protein resides in the vacuole. Its function is as follows. Thiol protease which is required for parasite excystation and invasion of the proximal small intestine of the human host. In Giardia intestinalis (Giardia lamblia), this protein is Cathepsin B-like CP2 (CP2).